A 55-amino-acid polypeptide reads, in one-letter code: Large ribosomal subunit protein bL33 (55 aa).

The protein belongs to the bacterial ribosomal protein bL33 family.

In Baumannia cicadellinicola subsp. Homalodisca coagulata, this protein is Large ribosomal subunit protein bL33.